A 202-amino-acid chain; its full sequence is Outer-membrane lipoprotein carrier protein (202 aa).

Residues 1–18 form the signal peptide; it reads MNKLFLILLLIFSHEVFS.

This sequence belongs to the LolA family. In terms of assembly, monomer.

The protein resides in the periplasm. Participates in the translocation of lipoproteins from the inner membrane to the outer membrane. Only forms a complex with a lipoprotein if the residue after the N-terminal Cys is not an aspartate (The Asp acts as a targeting signal to indicate that the lipoprotein should stay in the inner membrane). The protein is Outer-membrane lipoprotein carrier protein of Legionella pneumophila (strain Paris).